The following is a 357-amino-acid chain: Holliday junction branch migration complex subunit RuvB (357 aa).

Over residues 1-15 (MAIQSDSLSSLPDSP) the composition is skewed to low complexity. The disordered stretch occupies residues 1 to 30 (MAIQSDSLSSLPDSPRIVAPQPVSPNEESI). The tract at residues 13–195 (DSPRIVAPQP…FGIVSRLEFY (183 aa)) is large ATPase domain (RuvB-L). ATP is bound by residues leucine 34, arginine 35, glycine 76, lysine 79, threonine 80, threonine 81, 142–144 (EDF), arginine 185, tyrosine 195, and arginine 232. Threonine 80 serves as a coordination point for Mg(2+). The small ATPAse domain (RuvB-S) stretch occupies residues 196 to 266 (NTDELARIVT…AAGRALAMLD (71 aa)). A head domain (RuvB-H) region spans residues 269-357 (PQGLDVMDRK…SGGTGELFSK (89 aa)). Residues arginine 305, arginine 324, and arginine 329 each coordinate DNA.

It belongs to the RuvB family. In terms of assembly, homohexamer. Forms an RuvA(8)-RuvB(12)-Holliday junction (HJ) complex. HJ DNA is sandwiched between 2 RuvA tetramers; dsDNA enters through RuvA and exits via RuvB. An RuvB hexamer assembles on each DNA strand where it exits the tetramer. Each RuvB hexamer is contacted by two RuvA subunits (via domain III) on 2 adjacent RuvB subunits; this complex drives branch migration. In the full resolvosome a probable DNA-RuvA(4)-RuvB(12)-RuvC(2) complex forms which resolves the HJ.

Its subcellular location is the cytoplasm. It carries out the reaction ATP + H2O = ADP + phosphate + H(+). Its function is as follows. The RuvA-RuvB-RuvC complex processes Holliday junction (HJ) DNA during genetic recombination and DNA repair, while the RuvA-RuvB complex plays an important role in the rescue of blocked DNA replication forks via replication fork reversal (RFR). RuvA specifically binds to HJ cruciform DNA, conferring on it an open structure. The RuvB hexamer acts as an ATP-dependent pump, pulling dsDNA into and through the RuvAB complex. RuvB forms 2 homohexamers on either side of HJ DNA bound by 1 or 2 RuvA tetramers; 4 subunits per hexamer contact DNA at a time. Coordinated motions by a converter formed by DNA-disengaged RuvB subunits stimulates ATP hydrolysis and nucleotide exchange. Immobilization of the converter enables RuvB to convert the ATP-contained energy into a lever motion, pulling 2 nucleotides of DNA out of the RuvA tetramer per ATP hydrolyzed, thus driving DNA branch migration. The RuvB motors rotate together with the DNA substrate, which together with the progressing nucleotide cycle form the mechanistic basis for DNA recombination by continuous HJ branch migration. Branch migration allows RuvC to scan DNA until it finds its consensus sequence, where it cleaves and resolves cruciform DNA. The polypeptide is Holliday junction branch migration complex subunit RuvB (Bordetella parapertussis (strain 12822 / ATCC BAA-587 / NCTC 13253)).